Reading from the N-terminus, the 215-residue chain is Keratin-associated protein 26-1 (215 aa).

This sequence belongs to the PMG family. In terms of assembly, interacts with hair keratins.

In the hair cortex, hair keratin intermediate filaments are embedded in an interfilamentous matrix, consisting of hair keratin-associated proteins (KRTAP), which are essential for the formation of a rigid and resistant hair shaft through their extensive disulfide bond cross-linking with abundant cysteine residues of hair keratins. The matrix proteins include the high-sulfur and high-glycine-tyrosine keratins. In Mus musculus (Mouse), this protein is Keratin-associated protein 26-1.